Consider the following 263-residue polypeptide: tRNA pseudouridine synthase A (263 aa).

The active-site Nucleophile is the Asp57. Residue Tyr115 coordinates substrate.

It belongs to the tRNA pseudouridine synthase TruA family. Homodimer.

The catalysed reaction is uridine(38/39/40) in tRNA = pseudouridine(38/39/40) in tRNA. In terms of biological role, formation of pseudouridine at positions 38, 39 and 40 in the anticodon stem and loop of transfer RNAs. The sequence is that of tRNA pseudouridine synthase A from Buchnera aphidicola subsp. Schizaphis graminum (strain Sg).